Here is a 177-residue protein sequence, read N- to C-terminus: Co-chaperone protein HscB homolog (177 aa).

Positions 8-80 (DFFALFGLPR…LPRAQYMLEL (73 aa)) constitute a J domain.

It belongs to the HscB family. As to quaternary structure, interacts with HscA and stimulates its ATPase activity.

Functionally, co-chaperone involved in the maturation of iron-sulfur cluster-containing proteins. Seems to help targeting proteins to be folded toward HscA. The chain is Co-chaperone protein HscB homolog from Aromatoleum aromaticum (strain DSM 19018 / LMG 30748 / EbN1) (Azoarcus sp. (strain EbN1)).